A 549-amino-acid polypeptide reads, in one-letter code: Indole-3-acetic acid-amido synthetase GH3.2 (549 aa).

The protein belongs to the IAA-amido conjugating enzyme family. As to expression, expressed in flowers, pollen, cotyledons, stipules, true leaves, hypocotyls, and all parts of the roots except for the primary root tips.

Its function is as follows. Catalyzes the synthesis of indole-3-acetic acid (IAA)-amino acid conjugates, providing a mechanism for the plant to cope with the presence of excess auxin. Strongly reactive with Glu, Gln, Trp, Asp, Ala, Leu, Phe, Gly, Tyr, Met, Ile and Val. Little or no product formation with His, Ser, Thr, Arg, Lys, or Cys. Also active on pyruvic and butyric acid analogs of IAA, PAA and the synthetic auxin naphthaleneacetic acid (NAA). The two chlorinated synthetic auxin herbicides 2,4-D and 3,6-dichloro-o-anisic acid (dicamba) cannot be used as substrates. This Arabidopsis thaliana (Mouse-ear cress) protein is Indole-3-acetic acid-amido synthetase GH3.2 (GH3.2).